A 137-amino-acid chain; its full sequence is MSAHLQWMVVRNCSSFLIKRNKQTYSTEPNNLKARNSFRYNGLIHRKTVGVEPAADGKGVVVVMKRRSGQRKPATSYVRTTINKNARATLSSIRHMIRKNKYHPDLRMAAIRRASAILRSQKPVMVKRKRTRPTKSS.

S2 bears the N-acetylserine mark. Residues K58 and K65 each participate in a glycyl lysine isopeptide (Lys-Gly) (interchain with G-Cter in SUMO2) cross-link. S115 is modified (phosphoserine).

The protein belongs to the eukaryotic ribosomal protein eL28 family. As to quaternary structure, component of the large ribosomal subunit.

The protein resides in the cytoplasm. Functionally, component of the large ribosomal subunit. The ribosome is a large ribonucleoprotein complex responsible for the synthesis of proteins in the cell. The protein is Large ribosomal subunit protein eL28 (RPL28) of Oryctolagus cuniculus (Rabbit).